The chain runs to 466 residues: Cytochrome c-552 (466 aa).

An N-terminal signal peptide occupies residues 1-27; that stretch reads MVRILTKKSFALSALVAASLMASGAMA. His87 is a binding site for heme c. Residues Cys115, Cys118, and Lys119 each contribute to the heme site. Residues Cys153, Cys156, His157, Cys195, Cys198, and His199 each contribute to the heme c site. 4 residues coordinate Ca(2+): Glu201, Tyr202, Lys250, and Gln252. Tyr202 contacts substrate. His253 contributes to the substrate binding site. The heme c site is built by His264, Cys271, Cys274, His275, His290, Cys303, Cys306, His307, and His382.

Belongs to the cytochrome c-552 family. Ca(2+) serves as cofactor. Heme c is required as a cofactor.

The protein resides in the periplasm. It catalyses the reaction 6 Fe(III)-[cytochrome c] + NH4(+) + 2 H2O = 6 Fe(II)-[cytochrome c] + nitrite + 8 H(+). Its pathway is nitrogen metabolism; nitrate reduction (assimilation). Functionally, catalyzes the reduction of nitrite to ammonia, consuming six electrons in the process. This is Cytochrome c-552 from Shewanella woodyi (strain ATCC 51908 / MS32).